The sequence spans 1486 residues: Chromosome partition protein MukB (1486 aa).

Position 34-41 (34-41 (GGNGAGKS)) interacts with ATP. 3 coiled-coil regions span residues 334–418 (SDHL…QYNQ), 444–480 (LETF…QAYQ), and 509–603 (RHLA…RAPV). The interval 666-783 (PGGSEDQRLN…EVPLFGRAAR (118 aa)) is flexible hinge. Coiled-coil stretches lie at residues 835-923 (EAEI…AKLE), 977-1115 (EMLS…TAKA), and 1209-1266 (VEAI…QNVS).

This sequence belongs to the SMC family. MukB subfamily. Homodimerization via its hinge domain. Binds to DNA via its C-terminal region. Interacts, and probably forms a ternary complex, with MukE and MukF via its C-terminal region. The complex formation is stimulated by calcium or magnesium. Interacts with tubulin-related protein FtsZ.

The protein localises to the cytoplasm. Its subcellular location is the nucleoid. Functionally, plays a central role in chromosome condensation, segregation and cell cycle progression. Functions as a homodimer, which is essential for chromosome partition. Involved in negative DNA supercoiling in vivo, and by this means organize and compact chromosomes. May achieve or facilitate chromosome segregation by condensation DNA from both sides of a centrally located replisome during cell division. In Shigella sonnei (strain Ss046), this protein is Chromosome partition protein MukB.